The following is a 312-amino-acid chain: 4-hydroxyphenylacetate decarboxylase activating enzyme (312 aa).

A Radical SAM core domain is found at 16–299; sequence HDGPGCRTSV…MEHLQQLYLD (284 aa). Residues C30, C34, C37, C56, C62, C65, and C101 each coordinate [4Fe-4S] cluster. 36-38 provides a ligand contact to S-adenosyl-L-methionine; sequence WCA. 2 consecutive 4Fe-4S ferredoxin-type domains span residues 47–79 and 80–112; these read KHIM…FSED and GKLK…CVKE. S-adenosyl-L-methionine-binding positions include G140, 189-191, and H263; that span reads DVK.

Belongs to the organic radical-activating enzymes family. Monomer. The cofactor is [4Fe-4S] cluster.

It catalyses the reaction glycyl-[protein] + reduced [flavodoxin] + S-adenosyl-L-methionine = glycin-2-yl radical-[protein] + semiquinone [flavodoxin] + 5'-deoxyadenosine + L-methionine + H(+). In terms of biological role, catalyzes activation of 4-hydroxyphenylacetate decarboxylase under anaerobic conditions by generation of an organic free radical on a glycine residue, via a homolytic cleavage of S-adenosyl-L-methionine (SAM). This Clostridium scatologenes protein is 4-hydroxyphenylacetate decarboxylase activating enzyme.